The primary structure comprises 222 residues: Small ribosomal subunit protein uS3 (222 aa).

The region spanning 38 to 106 is the KH type-2 domain; it reads IRKFISEKLA…NVHINIVEIK (69 aa).

This sequence belongs to the universal ribosomal protein uS3 family. Part of the 30S ribosomal subunit. Forms a tight complex with proteins S10 and S14.

Binds the lower part of the 30S subunit head. Binds mRNA in the 70S ribosome, positioning it for translation. The polypeptide is Small ribosomal subunit protein uS3 (Lactobacillus johnsonii (strain CNCM I-12250 / La1 / NCC 533)).